We begin with the raw amino-acid sequence, 541 residues long: Chaperonin GroEL 2 (541 aa).

ATP-binding positions include 29 to 32 (TLGP), 86 to 90 (DGTTT), Gly413, and Asp492.

Belongs to the chaperonin (HSP60) family. As to quaternary structure, forms a cylinder of 14 subunits composed of two heptameric rings stacked back-to-back. Interacts with the co-chaperonin GroES.

It localises to the cytoplasm. The catalysed reaction is ATP + H2O + a folded polypeptide = ADP + phosphate + an unfolded polypeptide.. Together with its co-chaperonin GroES, plays an essential role in assisting protein folding. The GroEL-GroES system forms a nano-cage that allows encapsulation of the non-native substrate proteins and provides a physical environment optimized to promote and accelerate protein folding. This Nocardia farcinica (strain IFM 10152) protein is Chaperonin GroEL 2.